We begin with the raw amino-acid sequence, 80 residues long: Small ribosomal subunit protein uS17c (80 aa).

It belongs to the universal ribosomal protein uS17 family. Part of the 30S ribosomal subunit.

Its subcellular location is the plastid. The protein localises to the chloroplast. In terms of biological role, one of the primary rRNA binding proteins, it binds specifically to the 5'-end of 16S ribosomal RNA. This is Small ribosomal subunit protein uS17c (rps17) from Gracilaria tenuistipitata var. liui (Red alga).